A 361-amino-acid chain; its full sequence is 3-dehydroquinate synthase (361 aa).

NAD(+)-binding positions include 106–110 (GVVGD), 130–131 (TT), Lys143, and Lys152. Zn(2+) contacts are provided by Glu185, His247, and His264.

This sequence belongs to the sugar phosphate cyclases superfamily. Dehydroquinate synthase family. It depends on NAD(+) as a cofactor. Requires Co(2+) as cofactor. Zn(2+) serves as cofactor.

The protein localises to the cytoplasm. The enzyme catalyses 7-phospho-2-dehydro-3-deoxy-D-arabino-heptonate = 3-dehydroquinate + phosphate. The protein operates within metabolic intermediate biosynthesis; chorismate biosynthesis; chorismate from D-erythrose 4-phosphate and phosphoenolpyruvate: step 2/7. Functionally, catalyzes the conversion of 3-deoxy-D-arabino-heptulosonate 7-phosphate (DAHP) to dehydroquinate (DHQ). The protein is 3-dehydroquinate synthase of Gloeobacter violaceus (strain ATCC 29082 / PCC 7421).